The primary structure comprises 160 residues: Nucleotide-binding protein VC_1508 (160 aa).

This sequence belongs to the YajQ family.

In terms of biological role, nucleotide-binding protein. In Vibrio cholerae serotype O1 (strain ATCC 39315 / El Tor Inaba N16961), this protein is Nucleotide-binding protein VC_1508.